The sequence spans 136 residues: Transcription antitermination protein NusB (136 aa).

Belongs to the NusB family.

Involved in transcription antitermination. Required for transcription of ribosomal RNA (rRNA) genes. Binds specifically to the boxA antiterminator sequence of the ribosomal RNA (rrn) operons. The sequence is that of Transcription antitermination protein NusB from Pseudarthrobacter chlorophenolicus (strain ATCC 700700 / DSM 12829 / CIP 107037 / JCM 12360 / KCTC 9906 / NCIMB 13794 / A6) (Arthrobacter chlorophenolicus).